Here is a 151-residue protein sequence, read N- to C-terminus: Nucleoside diphosphate kinase (151 aa).

ATP-binding residues include Lys9, Phe57, Arg85, Thr91, Arg102, and Asn112. His115 (pros-phosphohistidine intermediate) is an active-site residue.

The protein belongs to the NDK family. It depends on Mg(2+) as a cofactor.

The protein localises to the cytoplasm. It carries out the reaction a 2'-deoxyribonucleoside 5'-diphosphate + ATP = a 2'-deoxyribonucleoside 5'-triphosphate + ADP. The enzyme catalyses a ribonucleoside 5'-diphosphate + ATP = a ribonucleoside 5'-triphosphate + ADP. In terms of biological role, major role in the synthesis of nucleoside triphosphates other than ATP. The ATP gamma phosphate is transferred to the NDP beta phosphate via a ping-pong mechanism, using a phosphorylated active-site intermediate. This Archaeoglobus fulgidus (strain ATCC 49558 / DSM 4304 / JCM 9628 / NBRC 100126 / VC-16) protein is Nucleoside diphosphate kinase.